A 350-amino-acid chain; its full sequence is Homoserine O-succinyltransferase (350 aa).

Cys146 (acyl-thioester intermediate) is an active-site residue. Substrate-binding residues include Lys167 and Ser196. His239 (proton acceptor) is an active-site residue. The active site involves Glu241. Arg253 contacts substrate.

Belongs to the MetA family.

The protein localises to the cytoplasm. The enzyme catalyses L-homoserine + succinyl-CoA = O-succinyl-L-homoserine + CoA. Its pathway is amino-acid biosynthesis; L-methionine biosynthesis via de novo pathway; O-succinyl-L-homoserine from L-homoserine: step 1/1. Its function is as follows. Transfers a succinyl group from succinyl-CoA to L-homoserine, forming succinyl-L-homoserine. This chain is Homoserine O-succinyltransferase, found in Cardiobacterium hominis (strain ATCC 15826 / DSM 8339 / NCTC 10426 / 6573).